Consider the following 124-residue polypeptide: Histone H2B (124 aa).

Positions 1 to 33 (MPEPAKSAPKKGSKKAVTKTAGKGGKKRKRSRK) are disordered. An N6-acetyllysine mark is found at K6 and K11. Residues 8-17 (APKKGSKKAV) show a composition bias toward basic residues. At S13 the chain carries Phosphoserine. K14 and K19 each carry N6-acetyllysine. O-linked (GlcNAc) serine glycosylation occurs at S111. Residue K119 forms a Glycyl lysine isopeptide (Lys-Gly) (interchain with G-Cter in ubiquitin) linkage.

This sequence belongs to the histone H2B family. As to quaternary structure, the nucleosome is a histone octamer containing two molecules each of H2A, H2B, H3 and H4 assembled in one H3-H4 heterotetramer and two H2A-H2B heterodimers. The octamer wraps approximately 147 bp of DNA. In terms of processing, monoubiquitination of Lys-119 by BRE1 gives a specific tag for epigenetic transcriptional activation and is also prerequisite for histone H3 'Lys-4' and 'Lys-79' methylation. Post-translationally, phosphorylated during apoptosis; which facilitates apoptotic chromatin condensation. GlcNAcylation at Ser-111 promotes monoubiquitination of Lys-119. It fluctuates in response to extracellular glucose, and associates with transcribed genes.

The protein localises to the nucleus. The protein resides in the chromosome. Core component of nucleosome. Nucleosomes wrap and compact DNA into chromatin, limiting DNA accessibility to the cellular machineries which require DNA as a template. Histones thereby play a central role in transcription regulation, DNA repair, DNA replication and chromosomal stability. DNA accessibility is regulated via a complex set of post-translational modifications of histones, also called histone code, and nucleosome remodeling. This chain is Histone H2B, found in Oncorhynchus mykiss (Rainbow trout).